Reading from the N-terminus, the 148-residue chain is CASP-like protein 1 (148 aa).

The next 3 helical transmembrane spans lie at 31–51 (FIYF…TSLL), 74–94 (VLLL…GYIG), and 121–141 (IAAG…SFFT).

Belongs to the Casparian strip membrane proteins (CASP) family. As to quaternary structure, homodimer and heterodimers.

Its subcellular location is the cell membrane. The protein is CASP-like protein 1 of Panax ginseng (Korean ginseng).